The primary structure comprises 235 residues: Isopentenyl-diphosphate Delta-isomerase I (235 aa).

Substrate is bound at residue Lys38. 2 residues coordinate Mg(2+): His42 and His54. The 153-residue stretch at 52–204 (LLHRAFSVFL…GLKLSPWFRL (153 aa)) folds into the Nudix hydrolase domain. Substrate-binding residues include Arg73 and Lys77. Residue Cys89 is part of the active site. Ser90 provides a ligand contact to substrate. 2 residues coordinate Mg(2+): Glu149 and Glu151. Residue Glu151 is part of the active site.

Belongs to the IPP isomerase type 1 family. Mg(2+) is required as a cofactor.

The catalysed reaction is isopentenyl diphosphate = dimethylallyl diphosphate. It functions in the pathway isoprenoid biosynthesis; dimethylallyl diphosphate biosynthesis; dimethylallyl diphosphate from isopentenyl diphosphate: step 1/1. It participates in porphyrin-containing compound metabolism; chlorophyll biosynthesis. Its function is as follows. Catalyzes the 1,3-allylic rearrangement of the homoallylic substrate isopentenyl (IPP) to its highly electrophilic allylic isomer, dimethylallyl diphosphate (DMAPP). This is Isopentenyl-diphosphate Delta-isomerase I (IPI1) from Camptotheca acuminata (Happy tree).